A 148-amino-acid chain; its full sequence is Antitoxin Xre (148 aa).

It belongs to the MbcA/ParS/Xre antitoxin family. Homodimer. Forms a complex with cognate toxin Rse.

Antitoxin component of a type II toxin-antitoxin (TA) system. Neutralizes the NAD(+) depleting activity of cognate toxin Res. The chain is Antitoxin Xre from Photorhabdus laumondii subsp. laumondii (strain DSM 15139 / CIP 105565 / TT01) (Photorhabdus luminescens subsp. laumondii).